Here is a 611-residue protein sequence, read N- to C-terminus: Dihydroxy-acid dehydratase (611 aa).

Residue Asp81 coordinates Mg(2+). Cys122 provides a ligand contact to [2Fe-2S] cluster. 2 residues coordinate Mg(2+): Asp123 and Lys124. Lys124 carries the post-translational modification N6-carboxylysine. Cys195 lines the [2Fe-2S] cluster pocket. A Mg(2+)-binding site is contributed by Glu491. Catalysis depends on Ser517, which acts as the Proton acceptor.

Belongs to the IlvD/Edd family. In terms of assembly, homodimer. It depends on [2Fe-2S] cluster as a cofactor. The cofactor is Mg(2+).

It catalyses the reaction (2R)-2,3-dihydroxy-3-methylbutanoate = 3-methyl-2-oxobutanoate + H2O. The catalysed reaction is (2R,3R)-2,3-dihydroxy-3-methylpentanoate = (S)-3-methyl-2-oxopentanoate + H2O. Its pathway is amino-acid biosynthesis; L-isoleucine biosynthesis; L-isoleucine from 2-oxobutanoate: step 3/4. The protein operates within amino-acid biosynthesis; L-valine biosynthesis; L-valine from pyruvate: step 3/4. Its function is as follows. Functions in the biosynthesis of branched-chain amino acids. Catalyzes the dehydration of (2R,3R)-2,3-dihydroxy-3-methylpentanoate (2,3-dihydroxy-3-methylvalerate) into 2-oxo-3-methylpentanoate (2-oxo-3-methylvalerate) and of (2R)-2,3-dihydroxy-3-methylbutanoate (2,3-dihydroxyisovalerate) into 2-oxo-3-methylbutanoate (2-oxoisovalerate), the penultimate precursor to L-isoleucine and L-valine, respectively. In Actinobacillus pleuropneumoniae serotype 5b (strain L20), this protein is Dihydroxy-acid dehydratase.